The chain runs to 75 residues: ATP synthase subunit c (75 aa).

Helical transmembrane passes span 13–33 (LNVV…GILI) and 54–74 (MFLG…LAFI).

Belongs to the ATPase C chain family. In terms of assembly, F-type ATPases have 2 components, F(1) - the catalytic core - and F(0) - the membrane proton channel. F(1) has five subunits: alpha(3), beta(3), gamma(1), delta(1), epsilon(1). F(0) has three main subunits: a(1), b(2) and c(10-14). The alpha and beta chains form an alternating ring which encloses part of the gamma chain. F(1) is attached to F(0) by a central stalk formed by the gamma and epsilon chains, while a peripheral stalk is formed by the delta and b chains.

The protein resides in the cell membrane. Functionally, f(1)F(0) ATP synthase produces ATP from ADP in the presence of a proton or sodium gradient. F-type ATPases consist of two structural domains, F(1) containing the extramembraneous catalytic core and F(0) containing the membrane proton channel, linked together by a central stalk and a peripheral stalk. During catalysis, ATP synthesis in the catalytic domain of F(1) is coupled via a rotary mechanism of the central stalk subunits to proton translocation. Its function is as follows. Key component of the F(0) channel; it plays a direct role in translocation across the membrane. A homomeric c-ring of between 10-14 subunits forms the central stalk rotor element with the F(1) delta and epsilon subunits. The chain is ATP synthase subunit c from Bifidobacterium adolescentis (strain ATCC 15703 / DSM 20083 / NCTC 11814 / E194a).